A 95-amino-acid polypeptide reads, in one-letter code: MVLRILLRYLLHNEQLVQRLADSYPFRRAAQLTASLILRGKSLGQESLELMSTSSLLRKLVERLSQTGEQAKQFSTEKAKRLEEAIKDMKRKQGL.

The protein is Protein NCBP2AS2 homolog of Ixodes scapularis (Black-legged tick).